The following is a 226-amino-acid chain: Membrane protein (226 aa).

Residues 1 to 11 (MSNGSIPVDEV) are Virion surface-facing. A helical transmembrane segment spans residues 12–32 (IEHLRNWNFTWNIILTILLVV). The Intravirion segment spans residues 33–41 (LQYGHYKYS). A helical membrane pass occupies residues 42–62 (VFLYGVKMAILWILWPLVLAL). The Virion surface segment spans residues 63 to 75 (SLFDAWASFQVNW). A helical transmembrane segment spans residues 76 to 96 (VFFAFSILMACITLMLWIMYF). The Intravirion portion of the chain corresponds to 97 to 226 (VNSIRLWRRT…TDSEKVLHLV (130 aa)). An interaction with N protein region spans residues 200 to 216 (RSKHGDYSAVSNPSAVL).

This sequence belongs to the alphacoronaviruses M protein family. Homomultimer. Interacts with envelope E protein in the budding compartment of the host cell, which is located between endoplasmic reticulum and the Golgi complex. Forms a complex with HE and S proteins. Interacts with nucleocapsid N protein. This interaction probably participates in RNA packaging into the virus.

It is found in the virion membrane. Its subcellular location is the host Golgi apparatus membrane. In terms of biological role, component of the viral envelope that plays a central role in virus morphogenesis and assembly via its interactions with other viral proteins. This chain is Membrane protein, found in Sus scrofa (Pig).